The primary structure comprises 984 residues: Translation initiation factor IF-2 (984 aa).

Disordered regions lie at residues 92–267 (KKRT…ERRR) and 280–392 (MNAP…EEHV). Low complexity predominate over residues 104 to 123 (PATPEVQPVAEAPAAAPAAP). The segment covering 124–177 (RIDEAELARREEEARRQAELIRRQEEELAEKRRLREEAEAREREQAEKAERAEQ) has biased composition (basic and acidic residues). Residues 193–235 (DAAAAAPAKEAAKPAAAPVAAAAAAAEQQAADTKLAAQTAATQ) show a composition bias toward low complexity. 2 stretches are compositionally biased toward basic and acidic residues: residues 236–267 (AKED…ERRR) and 291–302 (KAPEKPQPEKAA). Residues 310–335 (PAAPAARPGAPAAPGAAAAPGAAGAG) show a composition bias toward low complexity. Residues 351–361 (PAKKKEIKTRG) show a composition bias toward basic and acidic residues. The span at 363–375 (ASGGVGRGNWRGG) shows a compositional bias: gly residues. Positions 381–392 (GSNDRGGHEEHV) are enriched in basic and acidic residues. Positions 484 to 653 (PRAPVVTVMG…LLQAEVLELK (170 aa)) constitute a tr-type G domain. A G1 region spans residues 493–500 (GHVDHGKT). 493–500 (GHVDHGKT) contributes to the GTP binding site. The segment at 518–522 (GITQH) is G2. Positions 539–542 (DTPG) are G3. GTP contacts are provided by residues 539-543 (DTPGH) and 593-596 (NKID). The G4 stretch occupies residues 593 to 596 (NKID). Residues 629–631 (SAK) are G5.

It belongs to the TRAFAC class translation factor GTPase superfamily. Classic translation factor GTPase family. IF-2 subfamily.

It is found in the cytoplasm. Functionally, one of the essential components for the initiation of protein synthesis. Protects formylmethionyl-tRNA from spontaneous hydrolysis and promotes its binding to the 30S ribosomal subunits. Also involved in the hydrolysis of GTP during the formation of the 70S ribosomal complex. In Variovorax paradoxus (strain S110), this protein is Translation initiation factor IF-2.